The chain runs to 103 residues: Putative glutaredoxin-C12 (103 aa).

The 102-residue stretch at 1–102 (MERVRDLASE…QMLKASNAIW (102 aa)) folds into the Glutaredoxin domain. A disulfide bridge links Cys-21 with Cys-24.

It belongs to the glutaredoxin family. CC-type subfamily.

Its subcellular location is the cytoplasm. In terms of biological role, has a glutathione-disulfide oxidoreductase activity in the presence of NADPH and glutathione reductase. Reduces low molecular weight disulfides and proteins. This Arabidopsis thaliana (Mouse-ear cress) protein is Putative glutaredoxin-C12 (GRXC12).